The sequence spans 209 residues: Glycerol-3-phosphate acyltransferase (209 aa).

5 helical membrane-spanning segments follow: residues 4–24 (IAIG…AILI), 53–75 (LAAA…IGYG), 80–102 (PFWL…FFHF), 112–132 (LGAI…TWLL), and 138–158 (GYSS…VWWF).

It belongs to the PlsY family. As to quaternary structure, probably interacts with PlsX.

The protein localises to the cell inner membrane. It carries out the reaction an acyl phosphate + sn-glycerol 3-phosphate = a 1-acyl-sn-glycero-3-phosphate + phosphate. It functions in the pathway lipid metabolism; phospholipid metabolism. Functionally, catalyzes the transfer of an acyl group from acyl-phosphate (acyl-PO(4)) to glycerol-3-phosphate (G3P) to form lysophosphatidic acid (LPA). This enzyme utilizes acyl-phosphate as fatty acyl donor, but not acyl-CoA or acyl-ACP. In Sodalis glossinidius (strain morsitans), this protein is Glycerol-3-phosphate acyltransferase.